Reading from the N-terminus, the 394-residue chain is Dual-specificity RNA methyltransferase RlmN (394 aa).

The active-site Proton acceptor is Glu116. The region spanning 122–365 is the Radical SAM core domain; the sequence is EEDRGTLCVS…SPIRTPRGED (244 aa). A disulfide bond links Cys129 and Cys370. 3 residues coordinate [4Fe-4S] cluster: Cys136, Cys140, and Cys143. S-adenosyl-L-methionine is bound by residues 196 to 197, Ser228, 250 to 252, and Asn327; these read GE and SFH. Residue Cys370 is the S-methylcysteine intermediate of the active site.

This sequence belongs to the radical SAM superfamily. RlmN family. The cofactor is [4Fe-4S] cluster.

Its subcellular location is the cytoplasm. The enzyme catalyses adenosine(2503) in 23S rRNA + 2 reduced [2Fe-2S]-[ferredoxin] + 2 S-adenosyl-L-methionine = 2-methyladenosine(2503) in 23S rRNA + 5'-deoxyadenosine + L-methionine + 2 oxidized [2Fe-2S]-[ferredoxin] + S-adenosyl-L-homocysteine. The catalysed reaction is adenosine(37) in tRNA + 2 reduced [2Fe-2S]-[ferredoxin] + 2 S-adenosyl-L-methionine = 2-methyladenosine(37) in tRNA + 5'-deoxyadenosine + L-methionine + 2 oxidized [2Fe-2S]-[ferredoxin] + S-adenosyl-L-homocysteine. Functionally, specifically methylates position 2 of adenine 2503 in 23S rRNA and position 2 of adenine 37 in tRNAs. m2A2503 modification seems to play a crucial role in the proofreading step occurring at the peptidyl transferase center and thus would serve to optimize ribosomal fidelity. This Dinoroseobacter shibae (strain DSM 16493 / NCIMB 14021 / DFL 12) protein is Dual-specificity RNA methyltransferase RlmN.